A 202-amino-acid chain; its full sequence is Large ribosomal subunit protein bL25 (202 aa).

Belongs to the bacterial ribosomal protein bL25 family. CTC subfamily. As to quaternary structure, part of the 50S ribosomal subunit; part of the 5S rRNA/L5/L18/L25 subcomplex. Contacts the 5S rRNA. Binds to the 5S rRNA independently of L5 and L18.

In terms of biological role, this is one of the proteins that binds to the 5S RNA in the ribosome where it forms part of the central protuberance. This Corynebacterium efficiens (strain DSM 44549 / YS-314 / AJ 12310 / JCM 11189 / NBRC 100395) protein is Large ribosomal subunit protein bL25.